The chain runs to 454 residues: Growth/differentiation factor 9 (454 aa).

An N-terminal signal peptide occupies residues 1 to 24 (MARPNKFLLWFCCFAWLCFPISLG). Positions 25 to 319 (SQASGGEAQI…GRSSHHRHRR (295 aa)) are excised as a propeptide. N-linked (GlcNAc...) asparagine glycosylation is found at N106, N163, N236, N255, and N268. Positions 303-330 (GEEAAEDGRSSHHRHRRGQETVSSELKK) are disordered. A Phosphoserine; by CK modification is found at S325. N-linked (GlcNAc...) asparagine glycosylation is present at N338. Disulfide bonds link C353–C419, C382–C451, and C386–C453.

Belongs to the TGF-beta family. In terms of assembly, homodimer or heterodimer (Potential). But, in contrast to other members of this family, cannot be disulfide-linked. Post-translationally, phosphorylated; phosphorylation is critical for GDF9 function. In vitro, can be phosphorylated by CK at Ser-325. In terms of tissue distribution, expressed in ovarian granulosa cells. Present in oocytes of primary follicles (at protein level).

The protein resides in the secreted. In terms of biological role, required for ovarian folliculogenesis. Promotes primordial follicle development. Stimulates granulosa cell proliferation. Promotes cell transition from G0/G1 to S and G2/M phases, through an increase of CCND1 and CCNE1 expression, and RB1 phosphorylation. It regulates STAR expression and cAMP-dependent progesterone release in granulosa and thecal cells. Attenuates the suppressive effects of activin A on STAR expression and progesterone production by increasing the expression of inhibin B. It suppresses FST and FSTL3 production in granulosa-lutein cells. This is Growth/differentiation factor 9 (GDF9) from Homo sapiens (Human).